The following is a 225-amino-acid chain: Uridylate kinase (225 aa).

Residue 9–10 coordinates ATP; sequence GS. Gly-44 lines the UMP pocket. ATP-binding residues include Gly-45 and Arg-49. Residues Asp-66 and 114 to 120 contribute to the UMP site; that span reads THPGHTT. The ATP site is built by Thr-140, Asn-141, Tyr-146, and Asp-149.

It belongs to the UMP kinase family. As to quaternary structure, homohexamer.

It localises to the cytoplasm. The catalysed reaction is UMP + ATP = UDP + ADP. Its pathway is pyrimidine metabolism; CTP biosynthesis via de novo pathway; UDP from UMP (UMPK route): step 1/1. Its activity is regulated as follows. Inhibited by UTP. Functionally, catalyzes the reversible phosphorylation of UMP to UDP. In Thermococcus sibiricus (strain DSM 12597 / MM 739), this protein is Uridylate kinase.